The following is a 306-amino-acid chain: Serine/threonine-protein kinase csk1 (306 aa).

The region spanning 11–306 (LTDIRHLTDG…KVSARLSQYA (296 aa)) is the Protein kinase domain. ATP is bound by residues 17–25 (LTDGTISEV) and K40. D129 functions as the Proton acceptor in the catalytic mechanism.

It belongs to the protein kinase superfamily. CMGC Ser/Thr protein kinase family. CDC2/CDKX subfamily.

It catalyses the reaction L-seryl-[protein] + ATP = O-phospho-L-seryl-[protein] + ADP + H(+). The catalysed reaction is L-threonyl-[protein] + ATP = O-phospho-L-threonyl-[protein] + ADP + H(+). Acts as a CAK-activating kinase that specifically activates crk1 of the crk1-mcs2 CAK complex. This is Serine/threonine-protein kinase csk1 (csk1) from Schizosaccharomyces pombe (strain 972 / ATCC 24843) (Fission yeast).